The primary structure comprises 69 residues: Small ribosomal subunit protein bS21 (69 aa).

It belongs to the bacterial ribosomal protein bS21 family.

The protein is Small ribosomal subunit protein bS21 of Hyphomonas neptunium (strain ATCC 15444).